A 1150-amino-acid polypeptide reads, in one-letter code: PAN2-PAN3 deadenylation complex catalytic subunit pan2 (1150 aa).

2 WD repeats span residues 96–139 and 270–309; these read AHEE…DKLH and ANVS…HFNE. A linker region spans residues 310-446; it reads MSKEAEFGDV…GAKINGETDD (137 aa). A USP domain is found at 447–816; sequence DPLLKYSNVE…IPCVLAYQVQ (370 aa). In terms of domain architecture, Exonuclease spans 865-1043; the sequence is VALDTEFVDL…IEDARMALRL (179 aa). The a divalent metal cation site is built by Asp868, Glu870, Asp977, and Asp1036. A disordered region spans residues 1074 to 1150; sequence PPPRNGVPTV…GDFFSGSPLK (77 aa). Positions 1091–1106 are enriched in polar residues; the sequence is VTMQNNSGRNTPSTSD. The span at 1108 to 1120 shows a compositional bias: low complexity; the sequence is AGAAASAPATPRQ.

It belongs to the peptidase C19 family. PAN2 subfamily. In terms of assembly, forms a heterotrimer with an asymmetric homodimer of the regulatory subunit pan3 to form the poly(A)-nuclease (PAN) deadenylation complex. Requires a divalent metal cation as cofactor.

The protein localises to the cytoplasm. The enzyme catalyses Exonucleolytic cleavage of poly(A) to 5'-AMP.. Its activity is regulated as follows. Positively regulated by the regulatory subunit pan3. In terms of biological role, catalytic subunit of the poly(A)-nuclease (PAN) deadenylation complex, one of two cytoplasmic mRNA deadenylases involved in mRNA turnover. PAN specifically shortens poly(A) tails of RNA and the activity is stimulated by poly(A)-binding protein pab1. PAN deadenylation is followed by rapid degradation of the shortened mRNA tails by the CCR4-NOT complex. Deadenylated mRNAs are then degraded by two alternative mechanisms, namely exosome-mediated 3'-5' exonucleolytic degradation, or deadenylation-dependent mRNA decaping and subsequent 5'-3' exonucleolytic degradation by xrn1. May also be involved in post-transcriptional maturation of mRNA poly(A) tails. The chain is PAN2-PAN3 deadenylation complex catalytic subunit pan2 from Aspergillus niger (strain ATCC MYA-4892 / CBS 513.88 / FGSC A1513).